The following is a 743-amino-acid chain: Phosphoribosylformylglycinamidine synthase subunit PurL (743 aa).

Histidine 50 is a catalytic residue. ATP contacts are provided by tyrosine 53 and lysine 92. Residue glutamate 94 coordinates Mg(2+). Residues 95-98 (SHNH) and arginine 117 contribute to the substrate site. Residue histidine 96 is the Proton acceptor of the active site. Aspartate 118 is a binding site for Mg(2+). Glutamine 241 contacts substrate. Aspartate 269 is a binding site for Mg(2+). 313-315 (ESQ) contributes to the substrate binding site. Aspartate 494 and glycine 531 together coordinate ATP. Residue asparagine 532 participates in Mg(2+) binding. Residue serine 534 coordinates substrate.

It belongs to the FGAMS family. In terms of assembly, monomer. Part of the FGAM synthase complex composed of 1 PurL, 1 PurQ and 2 PurS subunits.

It localises to the cytoplasm. It catalyses the reaction N(2)-formyl-N(1)-(5-phospho-beta-D-ribosyl)glycinamide + L-glutamine + ATP + H2O = 2-formamido-N(1)-(5-O-phospho-beta-D-ribosyl)acetamidine + L-glutamate + ADP + phosphate + H(+). It functions in the pathway purine metabolism; IMP biosynthesis via de novo pathway; 5-amino-1-(5-phospho-D-ribosyl)imidazole from N(2)-formyl-N(1)-(5-phospho-D-ribosyl)glycinamide: step 1/2. Its function is as follows. Part of the phosphoribosylformylglycinamidine synthase complex involved in the purines biosynthetic pathway. Catalyzes the ATP-dependent conversion of formylglycinamide ribonucleotide (FGAR) and glutamine to yield formylglycinamidine ribonucleotide (FGAM) and glutamate. The FGAM synthase complex is composed of three subunits. PurQ produces an ammonia molecule by converting glutamine to glutamate. PurL transfers the ammonia molecule to FGAR to form FGAM in an ATP-dependent manner. PurS interacts with PurQ and PurL and is thought to assist in the transfer of the ammonia molecule from PurQ to PurL. This chain is Phosphoribosylformylglycinamidine synthase subunit PurL, found in Mesorhizobium japonicum (strain LMG 29417 / CECT 9101 / MAFF 303099) (Mesorhizobium loti (strain MAFF 303099)).